A 709-amino-acid chain; its full sequence is MGLNLLPIEMDDIRKRLDREPNEIEWRVIDAVWSEHCSYKSSKIFLKSFSIDSPNVIMGIKDWQDAGAVDIGDGWAIVIKVESHNHPSAIDPFNGAATGVGGIIRDIISKGAKPIALMDMIRVGNLKIRKNVWLLKNIIAGIAAYGNSIGVPVVGGELSFDDTYNDNPLVDVAAIGIVRKDKIKPSIVDKAGLKLVLAGLTGIDGLGGASFASRKLSGEDEIGAVQIADPFAGKIILDVTLEIADKVEAIKDLGGGGLAVAVTEMANGLGAIVDIEKIPLRVKNMDPADVIISETQERMLYAVEEKNVEEVCKAFEEYEYPCSVIGEITSEPIIKFRYFGKDLVSLPTNALLEPPKFLWPIKNVRKNVEEKNVDLSLESTIYTVLSHPDLVSKEWVYSQFDYEVNTSTVVKPGDANGAVVSLPNGKLLAIKADGNPDLCSEDAYECGKGIVAEAYRNLATVGARGMVAVDHLQFGDPKKPEVYYTFVEAIRGIGEATRFFNIPIVGGKVSFYNENSQGKPIKPTPLIVMAGLVQGKLLKNRVEDSSYVVLLGYTRKELGGSLLSKIFKVPSQAPKVRLQEDLLSSEVVIDAINEEKITFAKDISRGGLAASLFNIIVHGYGVEISTKSILSDTDNVVENLFSESSGRFVILTNEPEWIVEKSRSKGIVASIIGKVNKKTSILTIDNTDYDLKTIVNNYFNFLEEVIGNG.

Residue His-36 is part of the active site. Positions 39 and 80 each coordinate ATP. Glu-82 lines the Mg(2+) pocket. Substrate is bound by residues 83–86 (SHNH) and Arg-105. Residue His-84 is the Proton acceptor of the active site. Position 106 (Asp-106) interacts with Mg(2+). Gln-226 contributes to the substrate binding site. Residue Asp-252 coordinates Mg(2+). 294 to 296 (ETQ) serves as a coordination point for substrate. ATP contacts are provided by Asp-470 and Gly-507. Ser-510 contacts substrate.

Belongs to the FGAMS family. Monomer. Part of the FGAM synthase complex composed of 1 PurL, 1 PurQ and 2 PurS subunits.

Its subcellular location is the cytoplasm. It carries out the reaction N(2)-formyl-N(1)-(5-phospho-beta-D-ribosyl)glycinamide + L-glutamine + ATP + H2O = 2-formamido-N(1)-(5-O-phospho-beta-D-ribosyl)acetamidine + L-glutamate + ADP + phosphate + H(+). The protein operates within purine metabolism; IMP biosynthesis via de novo pathway; 5-amino-1-(5-phospho-D-ribosyl)imidazole from N(2)-formyl-N(1)-(5-phospho-D-ribosyl)glycinamide: step 1/2. Its function is as follows. Part of the phosphoribosylformylglycinamidine synthase complex involved in the purines biosynthetic pathway. Catalyzes the ATP-dependent conversion of formylglycinamide ribonucleotide (FGAR) and glutamine to yield formylglycinamidine ribonucleotide (FGAM) and glutamate. The FGAM synthase complex is composed of three subunits. PurQ produces an ammonia molecule by converting glutamine to glutamate. PurL transfers the ammonia molecule to FGAR to form FGAM in an ATP-dependent manner. PurS interacts with PurQ and PurL and is thought to assist in the transfer of the ammonia molecule from PurQ to PurL. The chain is Phosphoribosylformylglycinamidine synthase subunit PurL from Saccharolobus islandicus (strain Y.N.15.51 / Yellowstone #2) (Sulfolobus islandicus).